A 398-amino-acid polypeptide reads, in one-letter code: Putative defective protein IntQ (398 aa).

A Core-binding (CB) domain is found at 51–146; sequence LTIKELAEKF…NLNAVFQFGV (96 aa). Positions 167–378 constitute a Tyr recombinase domain; the sequence is TIPDPLSREE…SENNNAQVAL (212 aa). Active-site residues include R202, K236, R331, and H354. The O-(3'-phospho-DNA)-tyrosine intermediate role is filled by Y364.

This sequence belongs to the 'phage' integrase family.

Its function is as follows. Integrase is necessary for integration of the phage into the host genome by site-specific recombination. In conjunction with excisionase, integrase is also necessary for excision of the prophage from the host genome. The chain is Putative defective protein IntQ (intQ) from Escherichia coli (strain K12).